The chain runs to 101 residues: NADH-quinone oxidoreductase subunit K (101 aa).

3 consecutive transmembrane segments (helical) span residues 4–24 (LSHYLILGAVLFAISVVGIFL), 30–50 (IVLLMAIELMLLAVNLNFIAF), and 61–81 (VFVFFILTVAAAESAIGLAIL).

The protein belongs to the complex I subunit 4L family. As to quaternary structure, NDH-1 is composed of 14 different subunits. Subunits NuoA, H, J, K, L, M, N constitute the membrane sector of the complex.

It localises to the cell inner membrane. The catalysed reaction is a quinone + NADH + 5 H(+)(in) = a quinol + NAD(+) + 4 H(+)(out). NDH-1 shuttles electrons from NADH, via FMN and iron-sulfur (Fe-S) centers, to quinones in the respiratory chain. The immediate electron acceptor for the enzyme in this species is believed to be ubiquinone. Couples the redox reaction to proton translocation (for every two electrons transferred, four hydrogen ions are translocated across the cytoplasmic membrane), and thus conserves the redox energy in a proton gradient. The chain is NADH-quinone oxidoreductase subunit K from Azoarcus sp. (strain BH72).